The chain runs to 693 residues: MEHQDLTDSRKDPLCISQLKISSSSLDPLPQANMAEDLTKSRRHSPIKVEGSEETWGVEDDDDLTDPIFDTIEGNGHSDPTSCFDADLSEYKKKATVIVEEYFGTNDVVSVVNELKELGMAEYRYYFVKKLVSMAMDRHDKEKEMAAFLLSTLYADVIDPPEVYRGFNKLVASADDLSVDIPDAVDVLAVFVARAIVDDILPPAFLKKQMKLLPDNSKGVEVLRKAEKSYLATPLHAEVVEKRWGGTDNWTAEDVKARINDLLKEYVMSGDKKEAFRCIKGLKVPFFHHEIVKRALIMAMERRKAQVRLLDLLKETIEVGLINSTQVTKGFSRIIDSIEDLSLDIPDARRILQSFISKAASEGWLCASSLKSLSADAGEKLLENSSANVFKDKAKSIIREYFLSGDTSEVVHCLDTELNASSSQLRAIFVKYLITLAMDRKKREKEMACVLVSTLGFPPKDVRSAFSMLIESADDTALDNPVVVEDLAMFLARAVVDEVLAPRDLEEVLNQTPEAGSSVGEKVIQMAKTLLKARLSGERILRCWGGGGIETNSPGSTVKEVKEKIQILLEEYVSGGDLREASRCVKELGMPFFHHEVVKKSVVRIIEEKENEERLWKLLKVCFDSGLVTIYQMTKGFKRVDESLEDLSLDVPDAAKKFSSCVERGKLEGFLDESFASEDSQSKKQNGSSSSSG.

Residues 25–60 (SLDPLPQANMAEDLTKSRRHSPIKVEGSEETWGVED) form a disordered region. In terms of domain architecture, MI 1 spans 90-211 (EYKKKATVIV…PPAFLKKQMK (122 aa)). The Nuclear localization signal 1 motif lies at 241–248 (EKRWGGTD). 3 MI domains span residues 254–375 (DVKA…SLSA), 389–510 (VFKD…EVLN), and 560–681 (EVKE…EDSQ). A Nuclear localization signal 2 motif is present at residues 430-437 (VKYLITLA). The interval 673–693 (ESFASEDSQSKKQNGSSSSSG) is disordered. Low complexity predominate over residues 683–693 (KKQNGSSSSSG).

This sequence belongs to the PDCD4 family. As to quaternary structure, binds to EIF4A1. The association with ribosomes is modulated by cellular energy status and TOR activity. As to expression, mostly expressed in reproductive tissues, such as flower buds and flowers, and, to a lower extent, in vegetative tissues, such as leaves, roots and stems.

It localises to the nucleus. It is found in the cytoplasm. The protein localises to the cytosol. Involved in target of rapamycin (TOR)-regulated translation control, especially under energy-deficient conditions. The chain is MA3 DOMAIN-CONTAINING TRANSLATION REGULATORY FACTOR 2 from Arabidopsis thaliana (Mouse-ear cress).